The sequence spans 281 residues: MVGVLLSERNGSQKRHCSSISSDDGRKRVDKTRSAMLTDLDILDCPICYQALKIPVFQCGNGHLACSSCCPKLRNKCPACALPVGHIRCRAMERVLESVLVPCRYADLGCTKTIYYGRESTHEKICNFSPCSCPVQGCNYTGSYKDLYEHYDLTHSTGSTAYSFNGVSYIAAMMFISDKILIERVYEKKLLFVVQCFEEPCGVYVSVSCIAPSAPEVGEFSYGLLYTTWEGVTMTYQSPKVKKVLKVSSQRPKDSFMLIPHSLLCGPLLGMMLCINELKQM.

Positions 1 to 26 (MVGVLLSERNGSQKRHCSSISSDDGR) are disordered. Residues 45 to 81 (CPICYQALKIPVFQCGNGHLACSSCCPKLRNKCPACA) form an RING-type zinc finger. The segment at 95–280 (VLESVLVPCR…MMLCINELKQ (186 aa)) is SBD. The SIAH-type zinc-finger motif lies at 98 to 156 (SVLVPCRYADLGCTKTIYYGRESTHEKICNFSPCSCPVQGCNYTGSYKDLYEHYDLTHS). Residues C103, C110, H122, C126, C133, C138, H150, and H155 each coordinate Zn(2+).

It belongs to the SINA (Seven in absentia) family.

It catalyses the reaction S-ubiquitinyl-[E2 ubiquitin-conjugating enzyme]-L-cysteine + [acceptor protein]-L-lysine = [E2 ubiquitin-conjugating enzyme]-L-cysteine + N(6)-ubiquitinyl-[acceptor protein]-L-lysine.. Its pathway is protein modification; protein ubiquitination. Functionally, E3 ubiquitin-protein ligase that mediates ubiquitination and subsequent proteasomal degradation of target proteins. E3 ubiquitin ligases accept ubiquitin from an E2 ubiquitin-conjugating enzyme in the form of a thioester and then directly transfers the ubiquitin to targeted substrates. It probably triggers the ubiquitin-mediated degradation of different substrates. This Arabidopsis thaliana (Mouse-ear cress) protein is Putative E3 ubiquitin-protein ligase SINA-like 6.